The primary structure comprises 227 residues: Prolactin (227 aa).

The first 28 residues, 1–28, serve as a signal peptide directing secretion; the sequence is MDSKWSRRTGSLLLLLVSNLLLCKSTAS. Cysteines 32 and 39 form a disulfide. A phosphoserine mark is found at Ser-54, Ser-62, and Ser-118. Cystine bridges form between Cys-86–Cys-202 and Cys-219–Cys-227.

This sequence belongs to the somatotropin/prolactin family. As to quaternary structure, interacts with PRLR.

The protein resides in the secreted. Its function is as follows. Prolactin acts primarily on the mammary gland by promoting lactation. This Oryctolagus cuniculus (Rabbit) protein is Prolactin (PRL).